Here is a 397-residue protein sequence, read N- to C-terminus: Proteasome-activating nucleotidase (397 aa).

A coiled-coil region spans residues 15–58 (DYVTFLKRRIRQLELQVRTLEADKERLERELSRLRMEMSRLRQP). Residues 182–187 (GCGKTL) and His-321 contribute to the ATP site. Positions 395 to 397 (MYG) are docks into pockets in the proteasome alpha-ring to cause gate opening.

Belongs to the AAA ATPase family. As to quaternary structure, homohexamer. The hexameric complex has a two-ring architecture resembling a top hat that caps the 20S proteasome core at one or both ends. Upon ATP-binding, the C-terminus of PAN interacts with the alpha-rings of the proteasome core by binding to the intersubunit pockets.

The protein resides in the cytoplasm. Functionally, ATPase which is responsible for recognizing, binding, unfolding and translocation of substrate proteins into the archaeal 20S proteasome core particle. Is essential for opening the gate of the 20S proteasome via an interaction with its C-terminus, thereby allowing substrate entry and access to the site of proteolysis. Thus, the C-termini of the proteasomal ATPase function like a 'key in a lock' to induce gate opening and therefore regulate proteolysis. Unfolding activity requires energy from ATP hydrolysis, whereas ATP binding alone promotes ATPase-20S proteasome association which triggers gate opening, and supports translocation of unfolded substrates. The sequence is that of Proteasome-activating nucleotidase from Thermococcus kodakarensis (strain ATCC BAA-918 / JCM 12380 / KOD1) (Pyrococcus kodakaraensis (strain KOD1)).